Here is an 857-residue protein sequence, read N- to C-terminus: DNA mismatch repair protein MutS (857 aa).

621–628 (GPNMGGKS) is an ATP binding site.

This sequence belongs to the DNA mismatch repair MutS family.

This protein is involved in the repair of mismatches in DNA. It is possible that it carries out the mismatch recognition step. This protein has a weak ATPase activity. This is DNA mismatch repair protein MutS from Francisella tularensis subsp. tularensis (strain SCHU S4 / Schu 4).